We begin with the raw amino-acid sequence, 403 residues long: Zinc finger HIT domain-containing protein 2 (403 aa).

Residue methionine 1 is modified to N-acetylmethionine. Residues cysteine 7, cysteine 10, cysteine 22, cysteine 25, cysteine 30, cysteine 34, histidine 38, and cysteine 41 each coordinate Zn(2+). An HIT-type zinc finger spans residues 7-41; sequence CGFCPAGEVQPARYTCPRCNAPYCSLRCYRTHGTC. Residues 72–98 are disordered; the sequence is RQQRETEDEPGEAGLSSGPAPGGLSGL. Position 161 is a phosphothreonine (threonine 161).

As to quaternary structure, interacts (via HIT-type zinc finger) with RUVBL2 in the presence of ATP or ADP; shows a stronger interaction in the presence of ADP. As to expression, low expression in most tissues; highly expressed in testis.

In terms of biological role, may act as a bridging factor mediating the interaction between the R2TP/Prefoldin-like (R2TP/PFDL) complex and U5 small nuclear ribonucleoprotein (U5 snRNP). Required for the interaction of R2TP complex subunit RPAP3 and prefoldin-like subunit URI1 with U5 snRNP proteins EFTUD2 and PRPF8. May play a role in regulating the composition of the U5 snRNP complex. In Homo sapiens (Human), this protein is Zinc finger HIT domain-containing protein 2 (ZNHIT2).